The following is a 1040-amino-acid chain: Vitamin B12-dependent ribonucleotide reductase (1040 aa).

Residues Ser-169, 213 to 214, Gly-242, 420 to 424, and 604 to 608 contribute to the substrate site; these read AC, NPCSE, and PTGTI. Cysteines 214 and 433 form a disulfide. Asn-420 serves as the catalytic Proton acceptor. The active-site Cysteine radical intermediate is the Cys-422. Glu-424 functions as the Proton acceptor in the catalytic mechanism. 2 disordered regions span residues 909–932 and 969–988; these read SAEGAAKTGGNGPDLTTAPAGATA and GSATNGHSNGQSAGGSSDGA. The span at 969 to 979 shows a compositional bias: polar residues; sequence GSATNGHSNGQ.

The protein belongs to the ribonucleoside diphosphate reductase class-2 family. Adenosylcob(III)alamin serves as cofactor.

It carries out the reaction a 2'-deoxyribonucleoside 5'-diphosphate + [thioredoxin]-disulfide + H2O = a ribonucleoside 5'-diphosphate + [thioredoxin]-dithiol. Its function is as follows. Catalyzes the reduction of ribonucleotides to deoxyribonucleotides. May function to provide a pool of deoxyribonucleotide precursors for DNA repair during oxygen limitation and/or for immediate growth after restoration of oxygen. This is Vitamin B12-dependent ribonucleotide reductase (nrdJ) from Rhodopirellula baltica (strain DSM 10527 / NCIMB 13988 / SH1).